We begin with the raw amino-acid sequence, 529 residues long: MASNNLNVLNALDTAHTQWYHVTAVVIAGMGFFTDAYDLFCISTISKLLGRLYYYDPHTHAPGKLPHTVNNWVTGVALVGTLTGQLVFGWLGDKLGRKKVYGLTLILMVICALSSGLSFGYSRKVVIGTLCFFRFWLGFGIGGDYPLSATIMSEYANKRTRGAFIAAVFAMQGVGIIFAGLVLMTVSKVFLMRYAGKAFSTDEVFSTEPEADYVWRIVLMLGALPALLTYYWRMKMPETGRYTAIIEGNAKQAAIDMGKVLEIEIQAEGEKLAKFKSANDYSLLSNEFFQRHGLHLIGTMSTWFLLDIAFYSQNLTQKDIFPTMGLVSDAKSISALREMFETSRAMFVIALLGTFPGYWFTVFFIEKIGRFKIQLMGFFMMSIFMAIIGVRYDYLKTKDHKWTFAALYGLTFFFANSGPNSTTFVLPAELFPTRVRSTCHALSAASGKAGAMVSAFGVQQYTQDGEVHKIKKAMLFLAFTNMVGFCCTFLVTETKGRSLEEISGEDENQNETKMKGRPVSGGHQDDGWD.

The Cytoplasmic segment spans residues 1–21 (MASNNLNVLNALDTAHTQWYH). The helical transmembrane segment at 22 to 42 (VTAVVIAGMGFFTDAYDLFCI) threads the bilayer. The Extracellular portion of the chain corresponds to 43–71 (STISKLLGRLYYYDPHTHAPGKLPHTVNN). Residues 72–92 (WVTGVALVGTLTGQLVFGWLG) traverse the membrane as a helical segment. Topologically, residues 93–99 (DKLGRKK) are cytoplasmic. Residues 100-120 (VYGLTLILMVICALSSGLSFG) form a helical membrane-spanning segment. Residues 121 to 124 (YSRK) lie on the Extracellular side of the membrane. A helical transmembrane segment spans residues 125–145 (VVIGTLCFFRFWLGFGIGGDY). Topologically, residues 146–163 (PLSATIMSEYANKRTRGA) are cytoplasmic. Residues 164-184 (FIAAVFAMQGVGIIFAGLVLM) form a helical membrane-spanning segment. At 185 to 211 (TVSKVFLMRYAGKAFSTDEVFSTEPEA) the chain is on the extracellular side. A helical transmembrane segment spans residues 212–232 (DYVWRIVLMLGALPALLTYYW). Residues 233-291 (RMKMPETGRYTAIIEGNAKQAAIDMGKVLEIEIQAEGEKLAKFKSANDYSLLSNEFFQR) are Cytoplasmic-facing. The chain crosses the membrane as a helical span at residues 292–312 (HGLHLIGTMSTWFLLDIAFYS). Over 313–344 (QNLTQKDIFPTMGLVSDAKSISALREMFETSR) the chain is Extracellular. Asn314 is a glycosylation site (N-linked (GlcNAc...) asparagine). Residues 345-365 (AMFVIALLGTFPGYWFTVFFI) traverse the membrane as a helical segment. Topologically, residues 366–374 (EKIGRFKIQ) are cytoplasmic. A helical transmembrane segment spans residues 375 to 395 (LMGFFMMSIFMAIIGVRYDYL). Topologically, residues 396–405 (KTKDHKWTFA) are extracellular. A helical membrane pass occupies residues 406–426 (ALYGLTFFFANSGPNSTTFVL). Residues 427 to 472 (PAELFPTRVRSTCHALSAASGKAGAMVSAFGVQQYTQDGEVHKIKK) lie on the Cytoplasmic side of the membrane. The helical transmembrane segment at 473-493 (AMLFLAFTNMVGFCCTFLVTE) threads the bilayer. Residues 494–529 (TKGRSLEEISGEDENQNETKMKGRPVSGGHQDDGWD) lie on the Extracellular side of the membrane. Positions 500–529 (EEISGEDENQNETKMKGRPVSGGHQDDGWD) are disordered. Asn510 carries N-linked (GlcNAc...) asparagine glycosylation.

It belongs to the major facilitator superfamily. Phosphate:H(+) symporter (TC 2.A.1.9) family. As to expression, expressed at low levels in non-mycorrhized roots.

It localises to the cell membrane. It carries out the reaction phosphate(in) + H(+)(in) = phosphate(out) + H(+)(out). Functionally, low-affinity transporter for external inorganic phosphate (Pi) probably involved in the acquisition of phosphate released by arbuscular mycorrhizal (AM) fungi during AM symbiosis. The protein is Low affinity inorganic phosphate transporter 5 of Petunia hybrida (Petunia).